The primary structure comprises 620 residues: PAN2-PAN3 deadenylation complex subunit PAN3 (620 aa).

The C3H1-type zinc-finger motif lies at 7-36 (SAKGTLCKNILIYGYCKYENKGCAFSHRRN). 2 disordered regions span residues 39 to 73 (ANSG…QPST) and 95 to 168 (VFVP…QPGP). Polar residues-rich tracts occupy residues 63-73 (NVNTPSFQPST) and 101-126 (TPAS…TVSN). A pseudokinase domain region spans residues 226–482 (QSYPGGPEIV…LESYIRKHLA (257 aa)). Residues Arg274, 323–330 (DYYPNAST), and 380–381 (SK) contribute to the ATP site. The stretch at 483-521 (IRLLDVVDMLEDSNDYLESQLSTELENARLVRLMTKINF) forms a coiled coil. The knob domain stretch occupies residues 522–620 (IVDRPEWDNE…SVFRTITRGK (99 aa)).

This sequence belongs to the protein kinase superfamily. PAN3 family. Homodimer. Forms a heterotrimer with a catalytic subunit PAN2 to form the poly(A)-nuclease (PAN) deadenylation complex. Interacts (via PAM-2 motif) with poly(A)-binding protein PAB1 (via PABC domain), conferring substrate specificity of the enzyme complex.

It localises to the cytoplasm. Regulatory subunit of the poly(A)-nuclease (PAN) deadenylation complex, one of two cytoplasmic mRNA deadenylases involved in mRNA turnover. PAN specifically shortens poly(A) tails of RNA and the activity is stimulated by poly(A)-binding protein PAB1. PAN deadenylation is followed by rapid degradation of the shortened mRNA tails by the CCR4-NOT complex. Deadenylated mRNAs are then degraded by two alternative mechanisms, namely exosome-mediated 3'-5' exonucleolytic degradation, or deadenylation-dependent mRNA decaping and subsequent 5'-3' exonucleolytic degradation by XRN1. May also be involved in post-transcriptional maturation of mRNA poly(A) tails. PAN3 acts as a positive regulator for PAN activity, recruiting the catalytic subunit PAN2 to mRNA via its interaction with RNA and with PAB1. The polypeptide is PAN2-PAN3 deadenylation complex subunit PAN3 (Meyerozyma guilliermondii (strain ATCC 6260 / CBS 566 / DSM 6381 / JCM 1539 / NBRC 10279 / NRRL Y-324) (Yeast)).